The chain runs to 276 residues: Orotidine 5'-phosphate decarboxylase (276 aa).

Catalysis depends on lysine 93, which acts as the Proton donor.

Belongs to the OMP decarboxylase family. Type 2 subfamily.

It carries out the reaction orotidine 5'-phosphate + H(+) = UMP + CO2. The protein operates within pyrimidine metabolism; UMP biosynthesis via de novo pathway; UMP from orotate: step 2/2. In Halorubrum lacusprofundi (strain ATCC 49239 / DSM 5036 / JCM 8891 / ACAM 34), this protein is Orotidine 5'-phosphate decarboxylase.